The following is a 158-amino-acid chain: Protein ORF4 (158 aa).

Functionally, acts by interacting with multiple viral and host proteins to enhance the activity of viral RNA-dependent RNA polymerase. In Hepatitis E virus genotype 1 (isolate Human/Pakistan/Sar-55) (HEV-1), this protein is Protein ORF4.